Here is a 372-residue protein sequence, read N- to C-terminus: Zinc finger protein dpff-1 (372 aa).

The disordered stretch occupies residues 108–204; that stretch reads VGPTTESVSD…SRSIVKETKY (97 aa). Positions 109–131 are enriched in polar residues; it reads GPTTESVSDSSNDSTTIRPSRQT. The span at 132–141 shows a compositional bias: basic and acidic residues; the sequence is QIKEEYRDDY. Over residues 142–158 the composition is skewed to acidic residues; the sequence is VLDDELSPDEFGSDEDD. Polar residues predominate over residues 184 to 196; it reads TTRSSVSRLTPSR. Residues 212 to 235 form a C2H2-type zinc finger; that stretch reads YPCDKCSAKYKSLAGLSYHQSYLH. PHD-type zinc fingers lie at residues 256-314 and 316-361; these read SCDF…CKSC and ICGT…CQVE.

It belongs to the requiem/DPF family.

It is found in the nucleus. It localises to the cytoplasm. In terms of biological role, probable transcription factor, involved in meiosis and stress protection. The sequence is that of Zinc finger protein dpff-1 from Caenorhabditis elegans.